The chain runs to 689 residues: Protein asunder (689 aa).

Positions 521–550 form a coiled coil; it reads NGARLKLSKAKDQYRLLYRELEQLIQLNAT. 2 disordered regions span residues 591–619 and 669–689; these read SPER…SKRR and KDAV…SVRS. Positions 599 to 614 are enriched in low complexity; sequence SSVGASGSSNSNSLLK. Residues 613-619 carry the Nuclear localization signal (NLS) motif; the sequence is LKASKRR.

The protein belongs to the Integrator subunit 13 family. Belongs to the multiprotein complex Integrator, at least composed of IntS1, IntS2, IntS3, IntS4, omd/IntS5, IntS6, defl/IntS7, IntS8, IntS9, IntS10, IntS11, IntS12, asun/IntS13, IntS14 and IntS15. The core complex associates with protein phosphatase 2A subunits mts/PP2A and Pp2A-29B, to form the Integrator-PP2A (INTAC) complex. Post-translationally, phosphorylated.

It is found in the nucleus. It localises to the cytoplasm. The protein resides in the perinuclear region. Component of the integrator complex, a multiprotein complex that terminates RNA polymerase II (Pol II) transcription in the promoter-proximal region of genes. The integrator complex provides a quality checkpoint during transcription elongation by driving premature transcription termination of transcripts that are unfavorably configured for transcriptional elongation: the complex terminates transcription by (1) catalyzing dephosphorylation of the C-terminal domain (CTD) of Pol II subunit Polr2A/Rbp1 and Spt5, and (2) degrading the exiting nascent RNA transcript via endonuclease activity. The integrator complex is also involved in the 3'-end processing of the U7 snRNA, and also the spliceosomal snRNAs U1, U2, U4 and U5. The protein is Protein asunder (asun) of Drosophila simulans (Fruit fly).